The primary structure comprises 132 residues: Phosphoribosyl-AMP cyclohydrolase (132 aa).

A Mg(2+)-binding site is contributed by D86. Zn(2+) is bound at residue C87. Residues D88 and D90 each coordinate Mg(2+). Zn(2+) contacts are provided by C103 and C110.

This sequence belongs to the PRA-CH family. As to quaternary structure, homodimer. It depends on Mg(2+) as a cofactor. Zn(2+) is required as a cofactor.

The protein localises to the cytoplasm. The enzyme catalyses 1-(5-phospho-beta-D-ribosyl)-5'-AMP + H2O = 1-(5-phospho-beta-D-ribosyl)-5-[(5-phospho-beta-D-ribosylamino)methylideneamino]imidazole-4-carboxamide. The protein operates within amino-acid biosynthesis; L-histidine biosynthesis; L-histidine from 5-phospho-alpha-D-ribose 1-diphosphate: step 3/9. Its function is as follows. Catalyzes the hydrolysis of the adenine ring of phosphoribosyl-AMP. The sequence is that of Phosphoribosyl-AMP cyclohydrolase from Haloquadratum walsbyi (strain DSM 16790 / HBSQ001).